We begin with the raw amino-acid sequence, 222 residues long: Alpha-S2-casein (222 aa).

The N-terminal stretch at 1 to 15 (MKFFIFTCLLAVALA) is a signal peptide. Phosphoserine occurs at positions 23, 24, 25, 28, 46, 71, 72, 73, 76, 144, 146, 150, and 158. A repeat spans 76–140 (SAEVATEEVK…AVPITPTLNR (65 aa)). The stretch at residues 158-222 (STEVFTKKTK…TKVIPYVRYL (65 aa)) is a repeat.

The protein belongs to the alpha-casein family. Mammary gland specific. Secreted in milk.

It localises to the secreted. Functionally, important role in the capacity of milk to transport calcium phosphate. Its function is as follows. Casocidin-I inhibits the growth of E.coli and S.carnosus. The sequence is that of Alpha-S2-casein (CSN1S2) from Bos taurus (Bovine).